Here is a 431-residue protein sequence, read N- to C-terminus: ATP-dependent protease ATPase subunit HslU (431 aa).

ATP-binding positions include valine 18, glycine 60–glutamate 65, aspartate 244, glutamate 309, and arginine 381.

Belongs to the ClpX chaperone family. HslU subfamily. In terms of assembly, a double ring-shaped homohexamer of HslV is capped on each side by a ring-shaped HslU homohexamer. The assembly of the HslU/HslV complex is dependent on binding of ATP.

It is found in the cytoplasm. In terms of biological role, ATPase subunit of a proteasome-like degradation complex; this subunit has chaperone activity. The binding of ATP and its subsequent hydrolysis by HslU are essential for unfolding of protein substrates subsequently hydrolyzed by HslV. HslU recognizes the N-terminal part of its protein substrates and unfolds these before they are guided to HslV for hydrolysis. The sequence is that of ATP-dependent protease ATPase subunit HslU from Caulobacter sp. (strain K31).